The sequence spans 352 residues: Glycerol-3-phosphate dehydrogenase [NAD(P)+] (352 aa).

W11, R37, and K112 together coordinate NADPH. Sn-glycerol 3-phosphate-binding residues include K112, G153, and S155. Residue A157 participates in NADPH binding. Residues K208, D261, S271, R272, and N273 each contribute to the sn-glycerol 3-phosphate site. Catalysis depends on K208, which acts as the Proton acceptor. R272 serves as a coordination point for NADPH. 2 residues coordinate NADPH: V296 and E298.

The protein belongs to the NAD-dependent glycerol-3-phosphate dehydrogenase family.

It localises to the cytoplasm. The enzyme catalyses sn-glycerol 3-phosphate + NAD(+) = dihydroxyacetone phosphate + NADH + H(+). It carries out the reaction sn-glycerol 3-phosphate + NADP(+) = dihydroxyacetone phosphate + NADPH + H(+). It functions in the pathway membrane lipid metabolism; glycerophospholipid metabolism. In terms of biological role, catalyzes the reduction of the glycolytic intermediate dihydroxyacetone phosphate (DHAP) to sn-glycerol 3-phosphate (G3P), the key precursor for phospholipid synthesis. The sequence is that of Glycerol-3-phosphate dehydrogenase [NAD(P)+] from Polaromonas naphthalenivorans (strain CJ2).